The sequence spans 175 residues: Translation initiation factor IF-3, chloroplastic (175 aa).

Belongs to the IF-3 family. In terms of assembly, monomer.

It is found in the plastid. The protein localises to the chloroplast. In terms of biological role, IF-3 binds to the 30S ribosomal subunit and shifts the equilibrium between 70S ribosomes and their 50S and 30S subunits in favor of the free subunits, thus enhancing the availability of 30S subunits on which protein synthesis initiation begins. This is Translation initiation factor IF-3, chloroplastic from Cyanidioschyzon merolae (strain NIES-3377 / 10D) (Unicellular red alga).